The primary structure comprises 500 residues: Cytochrome P450 2C11 (500 aa).

Cysteine 435 provides a ligand contact to heme.

This sequence belongs to the cytochrome P450 family. The cofactor is heme. In terms of tissue distribution, liver and kidney; male-specific.

Its subcellular location is the endoplasmic reticulum membrane. It is found in the microsome membrane. The enzyme catalyses an organic molecule + reduced [NADPH--hemoprotein reductase] + O2 = an alcohol + oxidized [NADPH--hemoprotein reductase] + H2O + H(+). The catalysed reaction is testosterone + reduced [NADPH--hemoprotein reductase] + O2 = 2alpha,17beta-dihydroxyandrost-4-en-3-one + oxidized [NADPH--hemoprotein reductase] + H2O + H(+). It carries out the reaction testosterone + reduced [NADPH--hemoprotein reductase] + O2 = 16alpha,17beta-dihydroxyandrost-4-en-3-one + oxidized [NADPH--hemoprotein reductase] + H2O + H(+). It catalyses the reaction (5Z,8Z,11Z,14Z)-eicosatetraenoate + reduced [NADPH--hemoprotein reductase] + O2 = (8R,9S)-epoxy-(5Z,11Z,14Z)-eicosatrienoate + oxidized [NADPH--hemoprotein reductase] + H2O + H(+). The enzyme catalyses (5Z,8Z,11Z,14Z)-eicosatetraenoate + reduced [NADPH--hemoprotein reductase] + O2 = (8S,9R)-epoxy-(5Z,11Z,14Z)-eicosatrienoate + oxidized [NADPH--hemoprotein reductase] + H2O + H(+). The catalysed reaction is (5Z,8Z,11Z,14Z)-eicosatetraenoate + reduced [NADPH--hemoprotein reductase] + O2 = (11R,12S)-epoxy-(5Z,8Z,14Z)-eicosatrienoate + oxidized [NADPH--hemoprotein reductase] + H2O + H(+). It carries out the reaction (5Z,8Z,11Z,14Z)-eicosatetraenoate + reduced [NADPH--hemoprotein reductase] + O2 = (11S,12R)-epoxy-(5Z,8Z,14Z)-eicosatrienoate + oxidized [NADPH--hemoprotein reductase] + H2O + H(+). It catalyses the reaction (5Z,8Z,11Z,14Z)-eicosatetraenoate + reduced [NADPH--hemoprotein reductase] + O2 = (14R,15S)-epoxy-(5Z,8Z,11Z)-eicosatrienoate + oxidized [NADPH--hemoprotein reductase] + H2O + H(+). The enzyme catalyses (5Z,8Z,11Z,14Z)-eicosatetraenoate + reduced [NADPH--hemoprotein reductase] + O2 = (14S,15R)-epoxy-(5Z,8Z,11Z)-eicosatrienoate + oxidized [NADPH--hemoprotein reductase] + H2O + H(+). The catalysed reaction is (5Z,8Z,11Z,14Z,17Z)-eicosapentaenoate + reduced [NADPH--hemoprotein reductase] + O2 = 8,9-epoxy-(5Z,11Z,14Z,17Z)-eicosatetraenoate + oxidized [NADPH--hemoprotein reductase] + H2O + H(+). It carries out the reaction (5Z,8Z,11Z,14Z,17Z)-eicosapentaenoate + reduced [NADPH--hemoprotein reductase] + O2 = 11,12-epoxy-(5Z,8Z,14Z,17Z)-eicosatetraenoate + oxidized [NADPH--hemoprotein reductase] + H2O + H(+). It catalyses the reaction (5Z,8Z,11Z,14Z,17Z)-eicosapentaenoate + reduced [NADPH--hemoprotein reductase] + O2 = 14,15-epoxy-(5Z,8Z,11Z,17Z)-eicosatetraenoate + oxidized [NADPH--hemoprotein reductase] + H2O + H(+). The enzyme catalyses (5Z,8Z,11Z,14Z,17Z)-eicosapentaenoate + reduced [NADPH--hemoprotein reductase] + O2 = (17S,18R)-epoxy-(5Z,8Z,11Z,14Z)-eicosatetraenoate + oxidized [NADPH--hemoprotein reductase] + H2O + H(+). The catalysed reaction is (5Z,8Z,11Z,14Z,17Z)-eicosapentaenoate + reduced [NADPH--hemoprotein reductase] + O2 = (17R,18S)-epoxy-(5Z,8Z,11Z,14Z)-eicosatetraenoate + oxidized [NADPH--hemoprotein reductase] + H2O + H(+). It functions in the pathway lipid metabolism; arachidonate metabolism. The protein operates within steroid metabolism. In terms of biological role, a cytochrome P450 monooxygenase involved in the metabolism of steroid hormones and fatty acids. Catalyzes the hydroxylation of carbon-hydrogen bonds. Metabolizes testosterone to 2alpha- and 16alpha-hydroxytestosterone. Catalyzes the epoxidation of double bonds of polyunsaturated fatty acids (PUFAs). Converts arachidonic acid (ARA, C20:4(n-6)) primarily to epoxyeicosatrienoic acid (EET) regioisomers, 8,9-, 11,12-, and 14,15-EET, with both R,S and S,R stereochemistry. Preferentially produces 11R,12S-EET enantiomer. To a lesser extent, catalyzes the hydroxylation of arachidonic acid producing hydroxyeicosatetraenoates (HETEs). Metabolizes eicosapentaenoic acid (EPA, C20:5(n-3)) to epoxyeicosatetraenoic acid (EETeTr) regioisomers, 8,9-, 11,12-, 14,15-, and 17,18-EETeTr, preferentially producing 17R,18S-EETeTr enantiomer. Mechanistically, uses molecular oxygen inserting one oxygen atom into a substrate, and reducing the second into a water molecule, with two electrons provided by NADPH via cytochrome P450 reductase (NADPH--hemoprotein reductase). The polypeptide is Cytochrome P450 2C11 (Cyp2c11) (Rattus norvegicus (Rat)).